Here is a 79-residue protein sequence, read N- to C-terminus: Acyl carrier protein (79 aa).

The region spanning 1 to 76 (MSLEDDVIAI…DVFTYIKKRQ (76 aa)) is the Carrier domain. O-(pantetheine 4'-phosphoryl)serine is present on S36.

Belongs to the acyl carrier protein (ACP) family. In terms of processing, 4'-phosphopantetheine is transferred from CoA to a specific serine of apo-ACP by AcpS. This modification is essential for activity because fatty acids are bound in thioester linkage to the sulfhydryl of the prosthetic group.

Its subcellular location is the cytoplasm. It participates in lipid metabolism; fatty acid biosynthesis. Its function is as follows. Carrier of the growing fatty acid chain in fatty acid biosynthesis. This is Acyl carrier protein from Chlamydia pneumoniae (Chlamydophila pneumoniae).